A 119-amino-acid polypeptide reads, in one-letter code: MANSKRTLFLKRRLRVRNKLRKVNAGRLRLSVHRSNKNISVQLIDDVKGVTLAAASTLEKDLGFVGKNNIEAATKVGSVIAERAKAAGVTEAYFDRGGFLYHGKVKALADAAREGGLKI.

It belongs to the universal ribosomal protein uL18 family. In terms of assembly, part of the 50S ribosomal subunit; part of the 5S rRNA/L5/L18/L25 subcomplex. Contacts the 5S and 23S rRNAs.

Its function is as follows. This is one of the proteins that bind and probably mediate the attachment of the 5S RNA into the large ribosomal subunit, where it forms part of the central protuberance. The sequence is that of Large ribosomal subunit protein uL18 from Ruegeria sp. (strain TM1040) (Silicibacter sp.).